The following is a 659-amino-acid chain: mRNA export factor ICP27 homolog (659 aa).

4 residues coordinate Zn(2+): C130, H266, C268, and C273. The segment at 130-273 adopts a CHC2-type zinc-finger fold; the sequence is CMMSNGERPP…CEHACNDNAC (144 aa). Residues 317-659 form a disordered region; sequence GSFDDSRSAT…GEDGESDMTL (343 aa). The segment covering 324 to 336 has biased composition (low complexity); that stretch reads SATSGDGSSCSSA. Over residues 354-365 the composition is skewed to polar residues; that stretch reads SDQTDTSNNGTV. Residues 387–397 are compositionally biased toward basic and acidic residues; sequence SPLDRPNDYHY. A compositionally biased stretch (low complexity) spans 413–427; that stretch reads GSGSSSTEAVSTASA. Over residues 483–499 the composition is skewed to basic and acidic residues; it reads SPERRSSEERSSSDQRR. Residues 503 to 513 are compositionally biased toward polar residues; sequence LSRSASATSGG. Positions 553 to 575 are enriched in low complexity; that stretch reads SRSNTPPSSPSKPDSAPAASASP. The span at 598 to 610 shows a compositional bias: basic and acidic residues; that stretch reads ESVRVSERFETGD. 2 stretches are compositionally biased toward acidic residues: residues 617 to 628 and 646 to 659; these read ETEDESDDEDDQ and SETDGEDGESDMTL.

This sequence belongs to the HHV-1 ICP27 protein family.

It is found in the virion tegument. It localises to the virion. Its subcellular location is the host nucleus. The protein localises to the host cytoplasm. In terms of biological role, immediate early (EI) protein that plays many roles during productive infection including regulation of viral gene expression and nuclear export of intronless viral RNAs. This chain is mRNA export factor ICP27 homolog, found in Elephantid herpesvirus 1 (isolate Asian elephant/Berlin/Kiba/1998) (EIHV-1).